Consider the following 322-residue polypeptide: Probable ethanolamine-phosphate cytidylyltransferase (322 aa).

It belongs to the cytidylyltransferase family.

The enzyme catalyses phosphoethanolamine + CTP + H(+) = CDP-ethanolamine + diphosphate. Its pathway is phospholipid metabolism; phosphatidylethanolamine biosynthesis; phosphatidylethanolamine from ethanolamine: step 2/3. The protein is Probable ethanolamine-phosphate cytidylyltransferase (MUQ1) of Encephalitozoon cuniculi (strain GB-M1) (Microsporidian parasite).